Here is a 210-residue protein sequence, read N- to C-terminus: Thymidylate kinase (210 aa).

11-18 (GLEGAGKS) serves as a coordination point for ATP.

Belongs to the thymidylate kinase family.

It carries out the reaction dTMP + ATP = dTDP + ADP. Its function is as follows. Phosphorylation of dTMP to form dTDP in both de novo and salvage pathways of dTTP synthesis. This is Thymidylate kinase from Histophilus somni (strain 129Pt) (Haemophilus somnus).